Reading from the N-terminus, the 207-residue chain is Guanylate kinase (207 aa).

Residues 4-184 (GILFIISAPS…AVNDLITIIT (181 aa)) enclose the Guanylate kinase-like domain. 11–18 (APSGTGKS) contributes to the ATP binding site.

The protein belongs to the guanylate kinase family.

It localises to the cytoplasm. The catalysed reaction is GMP + ATP = GDP + ADP. Functionally, essential for recycling GMP and indirectly, cGMP. This is Guanylate kinase (gmk) from Buchnera aphidicola subsp. Acyrthosiphon pisum (strain APS) (Acyrthosiphon pisum symbiotic bacterium).